A 702-amino-acid chain; its full sequence is MAAPAADDDDHRAALPREEDDGEEEEGSEEEVESDDEEEEEGEGYDWSEEDDPEAASLAGICDPDAGSYDDPTFDPAADGDLEVDAVLRSRMARMSLSSARKDRKGSRMPKMGKEEMDLLAMVDKLMHDGQLEKLKVYECKAYLRMHKLRLSGNKEVLLTRIRGQIEVKTMGEVKYPVSSFVLNCQGDSCKGDVVVFEQNIYKRKKGAPRGVKGHLCGQRTNAGRIIKESYGTKKQQHTFTIEILWSRGYKPWPPLHPLLIKGRNLYKDKTMRQPWLDEEERNRALQEKHARGYVARKTREVRIKDKENERMRRLNRNKENKSKGQDNMNKKSSQAVFPQHTVTTNTVQKRAEKIIPSLQHGESGNSSQQHLSSKQTPTEQLLHYLPQFPHPQQHNEVLLQKGTSRTSTTQLINHQAPSLQHAVKVETTQQQQQQQPPKSIKPAPIQQSSAYPQQYPKHQHHNQALPRVPPSQEQRAAVSQTSAARQDFTNHQAPPSRQHGGSENMRRQEISSRPTPTPTPQQAVSYTQQQPPNHQYRNEAFWQQGGTSTSRTGFMDRQSNNWGSTDHDKPAFQPFTQKAKTYQHGSNGSGHHQARVDRETHQPLRSRNQDYHWEDQSYHHQQNHHQNYYGHRQMSQDQYHHQQNHHQNYHGRQGMNGNQYHDRQNHNQNPQRFRPWKPCFIYQQQGWCPYGENCKFMHDLR.

Residues 1–77 (MAAPAADDDD…SYDDPTFDPA (77 aa)) are disordered. The segment covering 18 to 54 (EEDDGEEEEGSEEEVESDDEEEEEGEGYDWSEEDDPE) has biased composition (acidic residues). Positions 132 to 166 (LEKLKVYECKAYLRMHKLRLSGNKEVLLTRIRGQI) constitute an SAP domain. Disordered stretches follow at residues 288-349 (EKHA…NTVQ), 405-532 (SRTS…QQQP), 546-602 (GGTS…RETH), and 634-673 (QMSQ…NPQR). A compositionally biased stretch (basic and acidic residues) spans 298-325 (KTREVRIKDKENERMRRLNRNKENKSKG). Composition is skewed to polar residues over residues 326–349 (QDNM…NTVQ) and 405–419 (SRTS…QAPS). A compositionally biased stretch (low complexity) spans 430-448 (QQQQQQQPPKSIKPAPIQQ). 4 stretches are compositionally biased toward polar residues: residues 472 to 502 (SQEQ…QHGG), 522 to 532 (QQAVSYTQQQP), 546 to 565 (GGTS…NWGS), and 575 to 591 (PFTQ…NGSG). Residues 674 to 702 (FRPWKPCFIYQQQGWCPYGENCKFMHDLR) form a C3H1-type zinc finger.

This Oryza sativa subsp. japonica (Rice) protein is Zinc finger CCCH domain-containing protein 62.